The following is an 873-amino-acid chain: Tyrosine-protein kinase transforming protein Fps (873 aa).

The tract at residues 1–46 is disordered; it reads ASGQLHRPQPQEHTSTSAAAGTWRLTQASESRHRLPHCSAAPSHQD. A compositionally biased stretch (polar residues) spans 11–29; it reads QEHTSTSAAAGTWRLTQAS. Residues 50 to 313 form the F-BAR domain; that stretch reads MGFGPELWCP…AVEMIDPATE (264 aa). Residues 445–471 are disordered; it reads GSEEPPPALPLQEDRQSARSTDQERSG. Basic and acidic residues predominate over residues 456-469; it reads QEDRQSARSTDQER. The SH2 domain occupies 511–600; it reads WYHGAIPRSE…KSGIVLTRAV (90 aa). A Protein kinase domain is found at 612–865; the sequence is VLLGERIGRG…PSFGAVHQDL (254 aa). ATP-binding positions include 618-626 and Lys-641; that span reads IGRGNFGEV. The active-site Proton acceptor is Asp-734. Tyr-764 is subject to Phosphotyrosine; by autocatalysis.

The protein belongs to the protein kinase superfamily. Tyr protein kinase family. Fes/fps subfamily.

It carries out the reaction L-tyrosyl-[protein] + ATP = O-phospho-L-tyrosyl-[protein] + ADP + H(+). This chain is Tyrosine-protein kinase transforming protein Fps (V-FPS), found in Gallus gallus (Chicken).